Here is a 381-residue protein sequence, read N- to C-terminus: Cytochrome b (381 aa).

A run of 4 helical transmembrane segments spans residues 38-58 (FGSLLGLCLLIQIVIGLFLAM), 82-103 (WLLRTVHANGASFFFICIYFHI), 118-138 (WMTGIALLFLVMAAAFLGYVL), and 183-203 (FFTFHFLIPFLVAGLTMIHLL). Residues H88 and H102 each coordinate heme b. Heme b contacts are provided by H187 and H201. H206 is an a ubiquinone binding site. The next 4 helical transmembrane spans lie at 231–251 (IKDTVGFMVLIFFLVTLSLTS), 293–313 (LGGVIALVSSILILVSLPFTF), 325–345 (VAQPLFWSWVSVFLLLTWIGA), and 352–372 (YNFLGQILTCAYFSYFVFTPI).

This sequence belongs to the cytochrome b family. In terms of assembly, the main subunits of complex b-c1 are: cytochrome b, cytochrome c1 and the Rieske protein. Heme b is required as a cofactor.

Its subcellular location is the mitochondrion inner membrane. Its function is as follows. Component of the ubiquinol-cytochrome c reductase complex (complex III or cytochrome b-c1 complex) that is part of the mitochondrial respiratory chain. The b-c1 complex mediates electron transfer from ubiquinol to cytochrome c. Contributes to the generation of a proton gradient across the mitochondrial membrane that is then used for ATP synthesis. This Artemia franciscana (Brine shrimp) protein is Cytochrome b (MT-CYB).